A 371-amino-acid polypeptide reads, in one-letter code: Opsin Rh1 (371 aa).

The Extracellular portion of the chain corresponds to 1-47 (MERYSTPLIGPSFAALTNGSVTDKVTPDMAHLVHPYWNQFPAMEPKW). An N-linked (GlcNAc...) asparagine glycan is attached at asparagine 18. Residues 48–72 (AKFLAAYMVLIATISWCGNGVVIYI) traverse the membrane as a helical segment. Over 73 to 84 (FSTTKSLRTPAN) the chain is Cytoplasmic. A helical transmembrane segment spans residues 85 to 110 (LLVINLAISDFGIMITNTPMMGINLF). Over 111–124 (YETWVLGPLMCDIY) the chain is Extracellular. A disulfide bridge links cysteine 121 with cysteine 198. Residues 125–144 (GGLGSAFGCSSILSMCMISL) traverse the membrane as a helical segment. Topologically, residues 145–163 (DRYNVIVKGMAGQPMTIKL) are cytoplasmic. The helical transmembrane segment at 164-187 (AIMKIALIWFMASIWTLAPVFGWS) threads the bilayer. Residues 188–211 (RYVPEGNLTSCGIDYLERDWNPRS) lie on the Extracellular side of the membrane. A helical transmembrane segment spans residues 212-239 (YLIFYSIFVYYLPLFLICYSYWFIIAAV). Residues 240 to 274 (SAHEKAMREQAKKMNVKSLRSSEDADKSAEGKLAK) lie on the Cytoplasmic side of the membrane. Residues 275–298 (VALVTISLWFMAWTPYTIINTLGL) traverse the membrane as a helical segment. The Extracellular portion of the chain corresponds to 299–305 (FKYEGLT). The helical transmembrane segment at 306 to 330 (PLNTIWGACFAKSAACYNPIVYGIS) threads the bilayer. An N6-(retinylidene)lysine modification is found at lysine 317. The Cytoplasmic portion of the chain corresponds to 331–371 (HPKYGIALKEKCPCCVFGKVDDGKASDATSQATNNESETKA).

Belongs to the G-protein coupled receptor 1 family. Opsin subfamily. Phosphorylated on some or all of the serine and threonine residues present in the C-terminal region.

It is found in the cell projection. The protein resides in the rhabdomere membrane. In terms of biological role, visual pigments are the light-absorbing molecules that mediate vision. They consist of an apoprotein, opsin, covalently linked to cis-retinal. This Calliphora vicina (Blue blowfly) protein is Opsin Rh1 (NINAE).